We begin with the raw amino-acid sequence, 645 residues long: 1-deoxy-D-xylulose-5-phosphate synthase (645 aa).

Thiamine diphosphate is bound by residues H83 and 124-126; that span reads GHS. D155 contributes to the Mg(2+) binding site. Thiamine diphosphate-binding positions include 156 to 157, N184, Y295, and E376; that span reads GS. Residue N184 participates in Mg(2+) binding.

This sequence belongs to the transketolase family. DXPS subfamily. As to quaternary structure, homodimer. It depends on Mg(2+) as a cofactor. Thiamine diphosphate serves as cofactor.

The catalysed reaction is D-glyceraldehyde 3-phosphate + pyruvate + H(+) = 1-deoxy-D-xylulose 5-phosphate + CO2. Its pathway is metabolic intermediate biosynthesis; 1-deoxy-D-xylulose 5-phosphate biosynthesis; 1-deoxy-D-xylulose 5-phosphate from D-glyceraldehyde 3-phosphate and pyruvate: step 1/1. Its function is as follows. Catalyzes the acyloin condensation reaction between C atoms 2 and 3 of pyruvate and glyceraldehyde 3-phosphate to yield 1-deoxy-D-xylulose-5-phosphate (DXP). This Desulfotalea psychrophila (strain LSv54 / DSM 12343) protein is 1-deoxy-D-xylulose-5-phosphate synthase.